The chain runs to 334 residues: Aspartate carbamoyltransferase catalytic subunit (334 aa).

The carbamoyl phosphate site is built by R70 and T71. K98 lines the L-aspartate pocket. Residues R120, H150, and Q153 each coordinate carbamoyl phosphate. L-aspartate contacts are provided by R183 and R239. Residues G280 and P281 each coordinate carbamoyl phosphate.

The protein belongs to the aspartate/ornithine carbamoyltransferase superfamily. ATCase family. As to quaternary structure, heterododecamer (2C3:3R2) of six catalytic PyrB chains organized as two trimers (C3), and six regulatory PyrI chains organized as three dimers (R2).

It carries out the reaction carbamoyl phosphate + L-aspartate = N-carbamoyl-L-aspartate + phosphate + H(+). It functions in the pathway pyrimidine metabolism; UMP biosynthesis via de novo pathway; (S)-dihydroorotate from bicarbonate: step 2/3. Its function is as follows. Catalyzes the condensation of carbamoyl phosphate and aspartate to form carbamoyl aspartate and inorganic phosphate, the committed step in the de novo pyrimidine nucleotide biosynthesis pathway. The chain is Aspartate carbamoyltransferase catalytic subunit from Pseudomonas paraeruginosa (strain DSM 24068 / PA7) (Pseudomonas aeruginosa (strain PA7)).